The chain runs to 121 residues: Large ribosomal subunit protein uL14 (121 aa).

The protein belongs to the universal ribosomal protein uL14 family. Part of the 50S ribosomal subunit. Forms a cluster with proteins L3 and L19. In the 70S ribosome, L14 and L19 interact and together make contacts with the 16S rRNA in bridges B5 and B8.

In terms of biological role, binds to 23S rRNA. Forms part of two intersubunit bridges in the 70S ribosome. In Parasynechococcus marenigrum (strain WH8102), this protein is Large ribosomal subunit protein uL14.